The sequence spans 274 residues: Putative bidirectional sugar transporter SWEET7d (274 aa).

Residues 1-8 (MVPDLIRN) are Extracellular-facing. Residues 9–29 (VVGIVGNVISFGLFLSPVPTF) form a helical membrane-spanning segment. One can recognise a MtN3/slv 1 domain in the interval 9–96 (VVGIVGNVIS…TIFFLFSDKK (88 aa)). Residues 30 to 45 (WRIIKNKDVRDFKADQ) lie on the Cytoplasmic side of the membrane. The chain crosses the membrane as a helical span at residues 46-66 (YLATLLNCMLWVFYGLPIVHP). Residues 67-68 (NS) are Extracellular-facing. The helical transmembrane segment at 69–89 (ILVVTINGIGLVIEAVYLTIF) threads the bilayer. Topologically, residues 90 to 100 (FLFSDKKNKKK) are cytoplasmic. A helical transmembrane segment spans residues 101–121 (MGVVLATEALFMAAVALGVLL). The Extracellular segment spans residues 122–130 (DAHTHQRRS). Residues 131–151 (LIVGILCVIFGTIMYSSPLTI) form a helical membrane-spanning segment. The MtN3/slv 2 domain occupies 132–214 (IVGILCVIFG…QLILYAIYYR (83 aa)). Residues 152-164 (MSQVVKTKSVEYM) are Cytoplasmic-facing. Residues 165 to 185 (PLLLSVVSFLNGLCWTSYALI) traverse the membrane as a helical segment. The Extracellular portion of the chain corresponds to 186-188 (RFD). A helical transmembrane segment spans residues 189–209 (IFITIPNGLGVLFALMQLILY). Topologically, residues 210–274 (AIYYRTTPKK…SISRLSHKLA (65 aa)) are cytoplasmic. Residues 218 to 274 (KKPSTTGPHPRSRIRTSSYQPSPPSPRAPASSPLSARTTTSMAAMSPSISRLSHKLA) are disordered. The segment covering 245 to 258 (APASSPLSARTTTS) has biased composition (low complexity).

Belongs to the SWEET sugar transporter family. As to quaternary structure, forms homooligomers and/or heterooligomers.

It localises to the cell membrane. In terms of biological role, mediates both low-affinity uptake and efflux of sugar across the plasma membrane. This chain is Putative bidirectional sugar transporter SWEET7d (SWEET7D), found in Oryza sativa subsp. japonica (Rice).